Reading from the N-terminus, the 209-residue chain is uncharacterized protein (209 aa).

Residues 1-17 form the signal peptide; it reads MKRLVTGLLALSLFLAA. The tract at residues 17 to 105 is disordered; it reads ACGQDSDQQK…SNNQANNNQK (89 aa). A lipid anchor (N-palmitoyl cysteine) is attached at C18. Residue C18 is the site of S-diacylglycerol cysteine attachment. Residues 23–70 show a composition bias toward basic and acidic residues; sequence DQQKDGNKEKDDKAKTEQQDKKTNDSSKDKKDNKDDSKDVNKDNKDNS. Residues 71–105 show a composition bias toward low complexity; the sequence is ANDNQQQSNSNATNNDQNQTNNNQSSNNQANNNQK.

Its subcellular location is the cell membrane. This is an uncharacterized protein from Staphylococcus aureus (strain COL).